The sequence spans 331 residues: Ferredoxin--NADP reductase 2 (331 aa).

FAD contacts are provided by Glu37, Gln45, Tyr50, Val90, Phe124, Asp286, and Thr327.

This sequence belongs to the ferredoxin--NADP reductase type 2 family. In terms of assembly, homodimer. FAD is required as a cofactor.

The catalysed reaction is 2 reduced [2Fe-2S]-[ferredoxin] + NADP(+) + H(+) = 2 oxidized [2Fe-2S]-[ferredoxin] + NADPH. This is Ferredoxin--NADP reductase 2 from Listeria welshimeri serovar 6b (strain ATCC 35897 / DSM 20650 / CCUG 15529 / CIP 8149 / NCTC 11857 / SLCC 5334 / V8).